The sequence spans 422 residues: Golgi-associated RAB2 interactor protein 2 (422 aa).

The tract at residues 353 to 404 (PVESEANTSKEMKDKTSEEKMPDFQSTALKAEESRSLRTESNTSVLSPHIKS) is disordered. The segment covering 360 to 374 (TSKEMKDKTSEEKMP) has biased composition (basic and acidic residues).

Belongs to the GARIN family. Interacts with CALM1. In terms of tissue distribution, expressed in spermatozoa (at protein level).

The protein resides in the cell projection. It is found in the cilium. It localises to the flagellum. Functionally, seems to play a role in sperm motility. This is Golgi-associated RAB2 interactor protein 2 from Homo sapiens (Human).